The sequence spans 182 residues: Testis-expressed protein 29 (182 aa).

Residues 1 to 56 (MRYTTDIKKSPPQLLKTFAVCDISLYDICDYNVTRDQCKELGCCFYKGVCYKKVVP) are Extracellular-facing. The helical transmembrane segment at 57–77 (IYVQMFSTLIVLVTGIIIITI) threads the bilayer. The Cytoplasmic portion of the chain corresponds to 78–182 (IYRIVQEIKR…PPTDPSENPP (105 aa)). Positions 91 to 182 (LSMNSTPKAS…PPTDPSENPP (92 aa)) are disordered. Residues 115 to 170 (RAPSRSPSRTSSTLSSRSPTTAPTTAPTTDPATDPATDPATDPATDPATDPATDPA) are compositionally biased toward low complexity. A compositionally biased stretch (pro residues) spans 171–182 (TAPPTDPSENPP).

The protein localises to the membrane. This chain is Testis-expressed protein 29 (Tex29), found in Rattus norvegicus (Rat).